The chain runs to 453 residues: tRNA modification GTPase MnmE (453 aa).

(6S)-5-formyl-5,6,7,8-tetrahydrofolate is bound by residues R22, E79, and K119. A TrmE-type G domain is found at 215-376 (GMKVVIAGRP…LREHLKACMG (162 aa)). Residue N225 participates in K(+) binding. Residues 225–230 (NAGKSS), 244–250 (TEIAGTT), 269–272 (DTAG), and 334–337 (NKAD) each bind GTP. S229 serves as a coordination point for Mg(2+). Positions 244, 246, and 249 each coordinate K(+). T250 is a binding site for Mg(2+). (6S)-5-formyl-5,6,7,8-tetrahydrofolate is bound at residue K453.

Belongs to the TRAFAC class TrmE-Era-EngA-EngB-Septin-like GTPase superfamily. TrmE GTPase family. As to quaternary structure, homodimer. Heterotetramer of two MnmE and two MnmG subunits. K(+) serves as cofactor.

Its subcellular location is the cytoplasm. Its function is as follows. Exhibits a very high intrinsic GTPase hydrolysis rate. Involved in the addition of a carboxymethylaminomethyl (cmnm) group at the wobble position (U34) of certain tRNAs, forming tRNA-cmnm(5)s(2)U34. The sequence is that of tRNA modification GTPase MnmE from Aeromonas hydrophila subsp. hydrophila (strain ATCC 7966 / DSM 30187 / BCRC 13018 / CCUG 14551 / JCM 1027 / KCTC 2358 / NCIMB 9240 / NCTC 8049).